Here is a 129-residue protein sequence, read N- to C-terminus: 3-oxo-4,17-pregnadiene-20-carboxyl-CoA hydratase beta subunit (129 aa).

This sequence belongs to the thioester dehydratase family. As to quaternary structure, heterodimer composed of ChsH1 and ChsH2. Two heterodimers combine to form a heterotetramer. The complex interacts with Ltp2 via the DUF35 C-terminal region of ChsH2. The ChsH1-ChsH2-Ltp2 protein complex is composed of two protomers that form a heterohexameric structure through the Ltp2 dimerization interface.

The catalysed reaction is 3-oxochola-4,17-dien-22-oyl-CoA + H2O = 17-hydroxy-3-oxochol-4-en-22-oyl-CoA. It catalyses the reaction (2E)-octenoyl-CoA + H2O = 3-hydroxyoctanoyl-CoA. The enzyme catalyses (2E)-decenoyl-CoA + H2O = 3-hydroxydecanoyl-CoA. The protein operates within steroid metabolism; cholesterol degradation. Its activity is regulated as follows. In the absence of the Ltp2 aldolase, ChsH1/ChsH2 can hydrate only about 30% of the 3-OPDC-CoA substrate. Complete turnover requires the presence of Ltp2. Involved in cholesterol side chain degradation. Catalyzes the hydration of 3-oxo-4,17-pregnadiene-20-carboxyl-CoA (3-OPDC-CoA) to form 17-hydroxy-3-oxo-4-pregnene-20-carboxyl-CoA (17-HOPC-CoA), in the modified beta-oxidation pathway for cholesterol side chain degradation. Can also use octenoyl-CoA and decenoyl-CoA, with lower efficiency. The protein is 3-oxo-4,17-pregnadiene-20-carboxyl-CoA hydratase beta subunit of Mycobacterium tuberculosis (strain ATCC 25618 / H37Rv).